The sequence spans 208 residues: Ras-related protein Rab-6A (208 aa).

Serine 2 carries the N-acetylserine modification. GTP contacts are provided by serine 23, valine 24, glycine 25, lysine 26, threonine 27, serine 28, aspartate 39, asparagine 40, tyrosine 42, and threonine 45. Threonine 27 is a binding site for Mg(2+). Positions 32-50 match the Switch 1 motif; the sequence is RFMYDSFDNTYQATIGIDF. Threonine 45 and aspartate 68 together coordinate Mg(2+). Residues 69–88 carry the Switch 2 motif; sequence TAGQERFRSLIPSYIRDSAA. GTP contacts are provided by glycine 71, asparagine 126, lysine 127, aspartate 129, serine 156, alanine 157, and lysine 158. 2 S-geranylgeranyl cysteine lipidation sites follow: cysteine 206 and cysteine 208. Cysteine 208 carries the post-translational modification Cysteine methyl ester.

This sequence belongs to the small GTPase superfamily. Rab family. Mg(2+) is required as a cofactor.

The protein resides in the golgi apparatus membrane. It catalyses the reaction GTP + H2O = GDP + phosphate + H(+). Its activity is regulated as follows. Regulated by guanine nucleotide exchange factors (GEFs) which promote the exchange of bound GDP for free GTP. Regulated by GTPase activating proteins (GAPs) which increase the GTP hydrolysis activity. Inhibited by GDP dissociation inhibitors (GDIs). The small GTPases Rab are key regulators of intracellular membrane trafficking, from the formation of transport vesicles to their fusion with membranes. Rabs cycle between an inactive GDP-bound form and an active GTP-bound form that is able to recruit to membranes different sets of downstream effectors directly responsible for vesicle formation, movement, tethering and fusion. RAB6A acts as a regulator of COPI-independent retrograde transport from the Golgi apparatus towards the endoplasmic reticulum (ER). The sequence is that of Ras-related protein Rab-6A (RAB6A) from Gallus gallus (Chicken).